A 2340-amino-acid chain; its full sequence is Protein pad-1 (2340 aa).

Disordered stretches follow at residues 411–458 (KLIK…EPSI) and 1910–1959 (TRNS…RRDP). The segment covering 415 to 432 (KRPDSKPPRKPGDREGLH) has biased composition (basic and acidic residues). Polar residues predominate over residues 437–448 (SLHSGVSGNSED). Over residues 1922–1934 (GGSITSGSTSTTT) the composition is skewed to low complexity.

The protein belongs to the DOP1 family.

Functionally, essential for cell patterning during gastrulation. May be involved in protein traffic between late Golgi and early endosomes. In Caenorhabditis briggsae, this protein is Protein pad-1 (pad-1).